The sequence spans 191 residues: Peptidyl-tRNA hydrolase (191 aa).

A tRNA-binding site is contributed by Y16. The Proton acceptor role is filled by H21. The tRNA site is built by F66, N68, and N114.

This sequence belongs to the PTH family. As to quaternary structure, monomer.

The protein resides in the cytoplasm. It carries out the reaction an N-acyl-L-alpha-aminoacyl-tRNA + H2O = an N-acyl-L-amino acid + a tRNA + H(+). Its function is as follows. Hydrolyzes ribosome-free peptidyl-tRNAs (with 1 or more amino acids incorporated), which drop off the ribosome during protein synthesis, or as a result of ribosome stalling. Catalyzes the release of premature peptidyl moieties from peptidyl-tRNA molecules trapped in stalled 50S ribosomal subunits, and thus maintains levels of free tRNAs and 50S ribosomes. This chain is Peptidyl-tRNA hydrolase, found in Geotalea uraniireducens (strain Rf4) (Geobacter uraniireducens).